A 317-amino-acid chain; its full sequence is tRNA dimethylallyltransferase (317 aa).

ATP is bound at residue 14-21 (GPTAVGKT). 16 to 21 (TAVGKT) is a substrate binding site. Positions 39–42 (DSMQ) are interaction with substrate tRNA.

The protein belongs to the IPP transferase family. As to quaternary structure, monomer. The cofactor is Mg(2+).

It carries out the reaction adenosine(37) in tRNA + dimethylallyl diphosphate = N(6)-dimethylallyladenosine(37) in tRNA + diphosphate. In terms of biological role, catalyzes the transfer of a dimethylallyl group onto the adenine at position 37 in tRNAs that read codons beginning with uridine, leading to the formation of N6-(dimethylallyl)adenosine (i(6)A). The polypeptide is tRNA dimethylallyltransferase (Bacillus cereus (strain G9842)).